Consider the following 489-residue polypeptide: uncharacterized protein (489 aa).

The next 13 membrane-spanning stretches (helical) occupy residues 1-21 (MNAA…LGIR), 40-60 (FGTV…FTFL), 74-94 (FYII…LPAV), 117-137 (PLLG…YLVL), 158-178 (AAIW…GIHG), 188-208 (IMIL…YYGG), 234-254 (AWFS…PHTF), 271-291 (IIMP…FAAI), 318-338 (FVGI…SMIL), 362-382 (VSAL…YFTF), 388-408 (IVTL…ALLF), 422-442 (FAGI…ETTI), and 456-476 (LNVG…VSLM).

Belongs to the sodium:solute symporter (SSF) (TC 2.A.21) family.

It is found in the cell membrane. This is an uncharacterized protein from Bacillus subtilis (strain 168).